The sequence spans 250 residues: Protein BTG4 (250 aa).

It belongs to the BTG family. In terms of assembly, interacts with CNOT7 and EIF4E. Interacts with CNOT8. In terms of tissue distribution, expressed in oocytes. Expressed in testis and in olfactory epithelium.

Adapter protein that bridges CNOT7, a catalytic subunit of the CCR4-NOT complex, to EIF4E, and facilitates maternal mRNAs decay during the maturation of oocytes and in the fertilized egg. It is therefore required for the maternal-zygotic transition (MZT), zygotic cleavage and initiation of embryonic development. This is Protein BTG4 (Btg4) from Mus musculus (Mouse).